The chain runs to 224 residues: Testis-expressed protein 30 (224 aa).

This is Testis-expressed protein 30 (TEX30) from Bos taurus (Bovine).